Reading from the N-terminus, the 375-residue chain is Quinolinate synthase (375 aa).

Iminosuccinate is bound by residues His-47 and Ser-64. Cys-110 contributes to the [4Fe-4S] cluster binding site. Iminosuccinate-binding positions include 144-146 (YVN) and Ser-165. Cys-235 contacts [4Fe-4S] cluster. Residues 261–263 (HPE) and Thr-278 contribute to the iminosuccinate site. Cys-325 is a binding site for [4Fe-4S] cluster.

This sequence belongs to the quinolinate synthase family. Type 3 subfamily. It depends on [4Fe-4S] cluster as a cofactor.

The protein localises to the cytoplasm. The catalysed reaction is iminosuccinate + dihydroxyacetone phosphate = quinolinate + phosphate + 2 H2O + H(+). Its pathway is cofactor biosynthesis; NAD(+) biosynthesis; quinolinate from iminoaspartate: step 1/1. Its function is as follows. Catalyzes the condensation of iminoaspartate with dihydroxyacetone phosphate to form quinolinate. This chain is Quinolinate synthase, found in Herpetosiphon aurantiacus (strain ATCC 23779 / DSM 785 / 114-95).